The following is a 666-amino-acid chain: MTPFQLQARYQPMGDQPTAIAQLVEQVQAGAPYQTLLGATGTGKTFTIANVIAQVGRPALVLAHNKTLAAQLCNELREFFPNNAVEYFISYYDYYQPEAYIPVTDTYIAKTASINEEIDMLRHSATRNLFERRDVIVVASISCIYGLGIPSEYLKAAIPLEVGAEINMREVLRQLVDVQYSRNDLESGRGRFRVKGDVLEIGPAYEDRIIRVEFFGDEIDAIRYIDPVTGEILQSLDRLNIYPARHFVTPEERLEIAIAEIKEELNQQLLTLQAEGKLVEAQRLEQRTRYDLEMLQEVGYCNGVENYARHLAGREPGSPPECLIDYFPKDWLLVVDESHVTVPQLRGMYNGDQSRKKVLVDHGFRLPSAADNRPLKSEEFWEKVRQCIFVSATPGDWEIERSEEQIVEQVIRPTGVVDPEVFVRPTEGQVDDLLAEIQQRVRRQERALITTLTKRMAEDLTDYLSDRGVKVRYLHSEINSIERIEILQDLRNGDFDVLIGVNLLREGLDLPEVSLVAILDADKEGFLRTERSLIQTIGRAARHINGQAILYADRMTESMEKAISETERRRRIQLDYNQRHNITPQPIIKRSSNAILSFLEVSRRLNKQELEVAVSQADDLSLEEIPNLITQLEAQMKEAAKNLEFEEAAQYRDRIKKLRERLVGRH.

The Helicase ATP-binding domain occupies 25 to 412 (EQVQAGAPYQ…EEQIVEQVIR (388 aa)). 38–45 (GATGTGKT) is a binding site for ATP. The Beta-hairpin signature appears at 91-114 (YYDYYQPEAYIPVTDTYIAKTASI). A Helicase C-terminal domain is found at 429-595 (QVDDLLAEIQ…PIIKRSSNAI (167 aa)). The 36-residue stretch at 626 to 661 (PNLITQLEAQMKEAAKNLEFEEAAQYRDRIKKLRER) folds into the UVR domain.

Belongs to the UvrB family. As to quaternary structure, forms a heterotetramer with UvrA during the search for lesions. Interacts with UvrC in an incision complex.

The protein localises to the cytoplasm. Its function is as follows. The UvrABC repair system catalyzes the recognition and processing of DNA lesions. A damage recognition complex composed of 2 UvrA and 2 UvrB subunits scans DNA for abnormalities. Upon binding of the UvrA(2)B(2) complex to a putative damaged site, the DNA wraps around one UvrB monomer. DNA wrap is dependent on ATP binding by UvrB and probably causes local melting of the DNA helix, facilitating insertion of UvrB beta-hairpin between the DNA strands. Then UvrB probes one DNA strand for the presence of a lesion. If a lesion is found the UvrA subunits dissociate and the UvrB-DNA preincision complex is formed. This complex is subsequently bound by UvrC and the second UvrB is released. If no lesion is found, the DNA wraps around the other UvrB subunit that will check the other stand for damage. The polypeptide is UvrABC system protein B (Synechococcus sp. (strain ATCC 27144 / PCC 6301 / SAUG 1402/1) (Anacystis nidulans)).